The primary structure comprises 565 residues: Adenine deaminase (565 aa).

This sequence belongs to the metallo-dependent hydrolases superfamily. Adenine deaminase family. It depends on Mn(2+) as a cofactor.

The enzyme catalyses adenine + H2O + H(+) = hypoxanthine + NH4(+). In Lactobacillus delbrueckii subsp. bulgaricus (strain ATCC 11842 / DSM 20081 / BCRC 10696 / JCM 1002 / NBRC 13953 / NCIMB 11778 / NCTC 12712 / WDCM 00102 / Lb 14), this protein is Adenine deaminase.